Reading from the N-terminus, the 205-residue chain is Small ribosomal subunit protein uS4 (205 aa).

The interval 1-46 (MSKRHSAKYKIDRRMGENLWGRPKSPVNQRSYGPGQHGQRRKQKVS) is disordered. The S4 RNA-binding domain maps to 94 to 154 (SRLDAIVYRA…EKSRNMALVL (61 aa)).

It belongs to the universal ribosomal protein uS4 family. As to quaternary structure, part of the 30S ribosomal subunit. Contacts protein S5. The interaction surface between S4 and S5 is involved in control of translational fidelity.

In terms of biological role, one of the primary rRNA binding proteins, it binds directly to 16S rRNA where it nucleates assembly of the body of the 30S subunit. Its function is as follows. With S5 and S12 plays an important role in translational accuracy. This Caulobacter sp. (strain K31) protein is Small ribosomal subunit protein uS4.